A 50-amino-acid chain; its full sequence is Inter-alpha-trypsin inhibitor heavy chain H2 (50 aa).

Belongs to the ITIH family. In terms of assembly, I-alpha-I plasma protease inhibitors are assembled from one or two heavy chains (HC) and one light chain, bikunin. Inter-alpha-inhibitor (I-alpha-I) is composed of ITIH1/HC1, ITIH2/HC2 and bikunin. Post-translationally, phosphorylated by FAM20C in the extracellular medium.

Its subcellular location is the secreted. May act as a carrier of hyaluronan in serum or as a binding protein between hyaluronan and other matrix protein, including those on cell surfaces in tissues to regulate the localization, synthesis and degradation of hyaluronan which are essential to cells undergoing biological processes. The protein is Inter-alpha-trypsin inhibitor heavy chain H2 (ITIH2) of Bos taurus (Bovine).